The sequence spans 419 residues: Heparan-sulfate 6-O-sulfotransferase 3-B (419 aa).

The Cytoplasmic portion of the chain corresponds to 1–7 (MNDKPNK). The helical; Signal-anchor for type II membrane protein transmembrane segment at 8–28 (WIFIPILAILFVMIGYQYVCP) threads the bilayer. Residues 29–419 (AGGQACHFRT…EDYASQVVRW (391 aa)) are Lumenal-facing. Asparagine 77 carries an N-linked (GlcNAc...) asparagine glycan. 101–109 (HIQKTGGTT) lines the 3'-phosphoadenylyl sulfate pocket. Substrate contacts are provided by residues 131-132 (KK), arginine 148, tryptophan 153, and histidine 158. The Proton acceptor role is filled by histidine 158. The 3'-phosphoadenylyl sulfate site is built by arginine 191 and serine 199. Residues histidine 203 and tryptophan 210 each coordinate substrate. Residues asparagine 270 and asparagine 275 are each glycosylated (N-linked (GlcNAc...) asparagine). 323-325 (TQI) contacts 3'-phosphoadenylyl sulfate. N-linked (GlcNAc...) asparagine glycosylation is present at asparagine 326. 329–330 (RA) is a binding site for 3'-phosphoadenylyl sulfate. Residues asparagine 393 and asparagine 402 are each glycosylated (N-linked (GlcNAc...) asparagine).

It belongs to the sulfotransferase 6 family. In terms of tissue distribution, in early somitogenesis, expressed in presumptive forebrain and midbrain, tail bud and Kupffer's vesicle. During mid-somitogenesis, ubiquitous expression which is strongest in the somites and eye. During late somitogenesis, predominantly expressed in eye, hindbrain and ventral somites. At 24 hours post-fertilization (hpf), restricted to lens and neural retina, brain, otic vesicle and somites. At 36 hpf, brain expression is restricted to telencephalon. At 48 hpf, restricted to telencephalon and pectoral fin.

The protein resides in the membrane. It catalyses the reaction alpha-D-glucosaminyl-[heparan sulfate](n) + 3'-phosphoadenylyl sulfate = 6-sulfo-alpha-D-glucosaminyl-[heparan sulfate](n) + adenosine 3',5'-bisphosphate + H(+). Its function is as follows. 6-O-sulfation enzyme which catalyzes the transfer of sulfate from 3'-phosphoadenosine 5'-phosphosulfate (PAPS) to position 6 of the N-sulfoglucosamine residue (GlcNS) of heparan sulfate. In Danio rerio (Zebrafish), this protein is Heparan-sulfate 6-O-sulfotransferase 3-B.